The primary structure comprises 258 residues: 5'-nucleotidase SurE (258 aa).

Aspartate 18, aspartate 19, serine 49, and asparagine 102 together coordinate a divalent metal cation.

It belongs to the SurE nucleotidase family. The cofactor is a divalent metal cation.

It is found in the cytoplasm. The enzyme catalyses a ribonucleoside 5'-phosphate + H2O = a ribonucleoside + phosphate. Functionally, nucleotidase that shows phosphatase activity on nucleoside 5'-monophosphates. This Vibrio parahaemolyticus serotype O3:K6 (strain RIMD 2210633) protein is 5'-nucleotidase SurE.